A 476-amino-acid chain; its full sequence is Serine/threonine-protein kinase PBL36 (476 aa).

Residues 126 to 412 (FRPESLLGEG…VEALKPLPNL (287 aa)) enclose the Protein kinase domain. ATP contacts are provided by residues 132 to 140 (LGEGGFGCV) and Lys-164. Tyr-209 bears the Phosphotyrosine mark. Catalysis depends on Asp-259, which acts as the Proton acceptor. Residues Ser-263 and Ser-293 each carry the phosphoserine modification. Phosphothreonine occurs at positions 294 and 299. Tyr-307 bears the Phosphotyrosine mark. Residues 431 to 476 (NGVRTQGGGFVSRNGPPMRSLSSLNLPQASPYRYARQSPKPKGKEP) are disordered.

The protein belongs to the protein kinase superfamily. Ser/Thr protein kinase family. As to quaternary structure, interacts with SD129. In terms of processing, phosphorylated by SD129 in response to the pathogen-associated molecular pattern (PAMP) 3-OH-C10:0, a medium-chain 3-hydroxy fatty acid.

The protein resides in the cell membrane. It carries out the reaction L-seryl-[protein] + ATP = O-phospho-L-seryl-[protein] + ADP + H(+). It catalyses the reaction L-threonyl-[protein] + ATP = O-phospho-L-threonyl-[protein] + ADP + H(+). Involved in chitin-triggered immune signaling and is required for reactive oxygen species (ROS) production. Acts downstream of SD129 in defense signaling triggered by the pathogen-associated molecular pattern (PAMP) 3-OH-C10:0, a medium-chain 3-hydroxy fatty acid. This Arabidopsis thaliana (Mouse-ear cress) protein is Serine/threonine-protein kinase PBL36.